A 508-amino-acid polypeptide reads, in one-letter code: Phenylalanine--tRNA ligase alpha subunit (508 aa).

Ala-2 carries the N-acetylalanine modification. 2 positions are modified to phosphoserine: Ser-193 and Ser-301. Lys-311 carries the N6-acetyllysine modification. L-phenylalanine is bound by residues Thr-329, 372-374 (QIE), and Tyr-412. Glu-414 provides a ligand contact to Mg(2+). An L-phenylalanine-binding site is contributed by Phe-438.

The protein belongs to the class-II aminoacyl-tRNA synthetase family. Phe-tRNA synthetase alpha subunit type 2 subfamily. In terms of assembly, heterotetramer; dimer of two heterodimers formed by FARSA and FARSB. Requires Mg(2+) as cofactor.

The protein resides in the cytoplasm. It carries out the reaction tRNA(Phe) + L-phenylalanine + ATP = L-phenylalanyl-tRNA(Phe) + AMP + diphosphate + H(+). The sequence is that of Phenylalanine--tRNA ligase alpha subunit (Farsa) from Rattus norvegicus (Rat).